We begin with the raw amino-acid sequence, 465 residues long: Methylenetetrahydrofolate--tRNA-(uracil-5-)-methyltransferase TrmFO (465 aa).

Gly-11–Gly-16 serves as a coordination point for FAD.

This sequence belongs to the MnmG family. TrmFO subfamily. The cofactor is FAD.

The protein localises to the cytoplasm. The enzyme catalyses uridine(54) in tRNA + (6R)-5,10-methylene-5,6,7,8-tetrahydrofolate + NADH + H(+) = 5-methyluridine(54) in tRNA + (6S)-5,6,7,8-tetrahydrofolate + NAD(+). The catalysed reaction is uridine(54) in tRNA + (6R)-5,10-methylene-5,6,7,8-tetrahydrofolate + NADPH + H(+) = 5-methyluridine(54) in tRNA + (6S)-5,6,7,8-tetrahydrofolate + NADP(+). Its function is as follows. Catalyzes the folate-dependent formation of 5-methyl-uridine at position 54 (M-5-U54) in all tRNAs. This chain is Methylenetetrahydrofolate--tRNA-(uracil-5-)-methyltransferase TrmFO, found in Acaryochloris marina (strain MBIC 11017).